Consider the following 434-residue polypeptide: MAVAVEITRSEVLRPSETLAAGGGGKRSQLTVFDRAAMDWYIPAVFAWDGAAAPSNDEVKGGLAAVLARYPHLAGRFDVDERGRRCFNLNNAGVRVLEATVAADLADALAHDVAAHVNELYPKADMENADEPVFQVQLTRYACGGLVIGTACNHQVSDGQSMSFFYVAWAAAVRSAGATLPTPFVDRAAIAVPRGPPAPAFDHRNIEFKGEHSWTHSYGSLPLERIRNLAVHFPDEFVAGLKSHVGARCSTFQCLLAHAWKKITAARDLSPEEYTQVRVAVNCRGRASPAVPMDYFGNMVLWAFPRMRVRDLLSSSYAAVVGVIRNAVARVDEQYIQSFVDFGEVAAGDELTPTAAPPGTVFCPDLEVDSWLGFRFHDLDFGRGPPCAFLPPDVPVEGLLIFVPSCAAKGGVEMFMALDDVHVEAFRQICYSMD.

Catalysis depends on proton acceptor residues histidine 154 and aspartate 380.

It belongs to the plant acyltransferase family.

Hydroxycinnamoyl transferase that catalyzes the transfer of an acyl from p-coumaryol-CoA to tryptamine, to produce coumaroyl tryptamine. Serotonin and tyramine serve as acyl acceptors in vitro. Can use caffeoyl-CoA, and to a lesser extent feruloyl-CoA, as acyl donors. The chain is Tryptamine hydroxycinnamoyltransferase 2 from Oryza sativa subsp. japonica (Rice).